The sequence spans 376 residues: Protein-tyrosine sulfotransferase 2 (376 aa).

The Cytoplasmic portion of the chain corresponds to 1 to 8; that stretch reads MRLSVRKV. The helical; Signal-anchor for type II membrane protein transmembrane segment at 9–25 threads the bilayer; it reads LLAAGCALALVLAVQLG. Residues 26-376 lie on the Lumenal side of the membrane; it reads QQVLECRAVL…NSTSPHLGSS (351 aa). 77-81 serves as a coordination point for 3'-phosphoadenylyl sulfate; the sequence is RSGTT. A disulfide bridge links Cys95 with Cys155. Glu98 functions as the Proton donor/acceptor in the catalytic mechanism. The interval 100–104 is interaction with peptide substrate; sequence RIIPR. 3 residues coordinate 3'-phosphoadenylyl sulfate: Arg182, Ser190, and Arg194. Cys224 and Cys232 are disulfide-bonded. Residues Tyr237, 284 to 293, and Lys299 contribute to the 3'-phosphoadenylyl sulfate site; that span reads STDQVIKPVN. 2 N-linked (GlcNAc...) asparagine glycosylation sites follow: Asn342 and Asn367.

The protein belongs to the protein sulfotransferase family. As to quaternary structure, homodimer. Can also form heterodimers with TPST1. In terms of processing, N-glycosylated. Widely expressed.

It localises to the golgi apparatus membrane. It carries out the reaction L-tyrosyl-[protein] + 3'-phosphoadenylyl sulfate = O-sulfo-L-tyrosine-[protein] + adenosine 3',5'-bisphosphate + H(+). In terms of biological role, catalyzes the O-sulfation of tyrosine residues within acidic motifs of polypeptides, using 3'-phosphoadenylyl sulfate (PAPS) as cosubstrate. This is Protein-tyrosine sulfotransferase 2 (Tpst2) from Mus musculus (Mouse).